Consider the following 322-residue polypeptide: Putative pyruvyl transferase EpsO (322 aa).

This sequence belongs to the polysaccharide pyruvyl transferase family.

In terms of biological role, may be involved in the production of the exopolysaccharide (EPS) component of the extracellular matrix during biofilm formation. EPS is responsible for the adhesion of chains of cells into bundles. In Bacillus subtilis (strain 168), this protein is Putative pyruvyl transferase EpsO (epsO).